Consider the following 488-residue polypeptide: Ribulose bisphosphate carboxylase large chain (488 aa).

Substrate-binding residues include Asn127 and Thr177. Residue Lys179 is the Proton acceptor of the active site. Lys181 lines the substrate pocket. Mg(2+) contacts are provided by Lys205, Asp207, and Glu208. N6-carboxylysine is present on Lys205. The active-site Proton acceptor is His297. 3 residues coordinate substrate: Arg298, His330, and Ser382.

Belongs to the RuBisCO large chain family. Type I subfamily. Heterohexadecamer of 8 large chains and 8 small chains. Mg(2+) is required as a cofactor.

It is found in the plastid. The protein localises to the chloroplast. It catalyses the reaction 2 (2R)-3-phosphoglycerate + 2 H(+) = D-ribulose 1,5-bisphosphate + CO2 + H2O. It carries out the reaction D-ribulose 1,5-bisphosphate + O2 = 2-phosphoglycolate + (2R)-3-phosphoglycerate + 2 H(+). In terms of biological role, ruBisCO catalyzes two reactions: the carboxylation of D-ribulose 1,5-bisphosphate, the primary event in carbon dioxide fixation, as well as the oxidative fragmentation of the pentose substrate in the photorespiration process. Both reactions occur simultaneously and in competition at the same active site. The sequence is that of Ribulose bisphosphate carboxylase large chain from Gracilaria tenuistipitata var. liui (Red alga).